We begin with the raw amino-acid sequence, 367 residues long: Peptide chain release factor 2 (367 aa).

N5-methylglutamine is present on Q254.

This sequence belongs to the prokaryotic/mitochondrial release factor family. Post-translationally, methylated by PrmC. Methylation increases the termination efficiency of RF2.

It is found in the cytoplasm. In terms of biological role, peptide chain release factor 2 directs the termination of translation in response to the peptide chain termination codons UGA and UAA. This Janthinobacterium sp. (strain Marseille) (Minibacterium massiliensis) protein is Peptide chain release factor 2.